A 546-amino-acid polypeptide reads, in one-letter code: Probable zinc metalloprotease EGY2, chloroplastic (546 aa).

Residues 1-64 (MQLPAMSCSP…QIRNRRFVCQ (64 aa)) constitute a chloroplast transit peptide. The segment at 67 to 143 (TETEPDGDGN…DATPASDAQE (77 aa)) is disordered. Residues 69-86 (TEPDGDGNGDEEKEELGD) are compositionally biased toward acidic residues. Polar residues-rich tracts occupy residues 89–110 (SSPS…TNAD) and 118–130 (NTEP…TVQN). Helical transmembrane passes span 257 to 277 (AVPE…TLLL), 301 to 321 (VYGA…HILA), 326 to 346 (GIKL…FGAI), 364 to 384 (AAGP…GFIL), 427 to 447 (PLVL…IPAG), 474 to 494 (LLGI…LIFF), and 514 to 534 (YISI…PYPF).

This sequence belongs to the peptidase M50B family.

Its subcellular location is the plastid. It localises to the chloroplast membrane. Probable membrane-associated metalloprotease that may be involved in chloroplast development. This Oryza sativa subsp. japonica (Rice) protein is Probable zinc metalloprotease EGY2, chloroplastic (EGY2).